The primary structure comprises 181 residues: Large ribosomal subunit protein uL10 (181 aa).

The protein belongs to the universal ribosomal protein uL10 family. As to quaternary structure, part of the ribosomal stalk of the 50S ribosomal subunit. The N-terminus interacts with L11 and the large rRNA to form the base of the stalk. The C-terminus forms an elongated spine to which L12 dimers bind in a sequential fashion forming a multimeric L10(L12)X complex.

Functionally, forms part of the ribosomal stalk, playing a central role in the interaction of the ribosome with GTP-bound translation factors. This is Large ribosomal subunit protein uL10 from Fervidobacterium nodosum (strain ATCC 35602 / DSM 5306 / Rt17-B1).